Here is a 294-residue protein sequence, read N- to C-terminus: MKKPFEVIAIIGKPRDQQAIQTHRELYQWLSTEGYQVFVDDRLATILDDIPQEHFSSLIELGKRADLAIVVGGDGNMLGAARILSRFDISVIGVNRGNLGFLTDLNPENFQSALTDVLKGEFMEEERFLLETEIHRHGQIKSHNAALNEAVLHPGQVAHMIEFEVYIDDSFAFSQRSDGLIVSTPTGSTAYSLSGGGPILSSSLNAISLVPMFPHTLSSRPLVVDGKRRIKLIVSPDNRGTQEVSCDGQISLPVSPGDEIHIYQSPNVLKLIHPKDYNYYHVLRNKLGWSSKLF.

Aspartate 74 acts as the Proton acceptor in catalysis. Residues 74–75 (DG), 148–149 (NE), histidine 159, arginine 176, aspartate 178, 189–194 (TAYSLS), and glutamine 249 contribute to the NAD(+) site.

This sequence belongs to the NAD kinase family. Requires a divalent metal cation as cofactor.

Its subcellular location is the cytoplasm. It catalyses the reaction NAD(+) + ATP = ADP + NADP(+) + H(+). Involved in the regulation of the intracellular balance of NAD and NADP, and is a key enzyme in the biosynthesis of NADP. Catalyzes specifically the phosphorylation on 2'-hydroxyl of the adenosine moiety of NAD to yield NADP. In Vibrio atlanticus (strain LGP32) (Vibrio splendidus (strain Mel32)), this protein is NAD kinase.